A 315-amino-acid chain; its full sequence is Type II restriction enzyme SalI (315 aa).

It catalyses the reaction Endonucleolytic cleavage of DNA to give specific double-stranded fragments with terminal 5'-phosphates.. In terms of biological role, a P subtype restriction enzyme that recognizes the double-stranded sequence 5'-GTCGAC-3' and cleaves after G-1. This Streptomyces albus G protein is Type II restriction enzyme SalI.